We begin with the raw amino-acid sequence, 512 residues long: Cytochrome P450 monooxygenase poxM (512 aa).

The helical transmembrane segment at 15–35 (LLKGATIALSFFSLYLFGLVI) threads the bilayer. A heme-binding site is contributed by Cys-449.

This sequence belongs to the cytochrome P450 family. Heme serves as cofactor.

The protein localises to the membrane. Its pathway is secondary metabolite biosynthesis. Cytochrome P450 monooxygenase; part of the gene cluster that mediates the biosynthesis of oxaleimides, cytotoxic compounds containing an unusual disubstituted succinimide moiety. The first step of the pathway is provided by the HR-PKS poxF that serves in a new mode of collaborative biosynthesis with the PKS-NRPS poxE, by providing the olefin containing amino acid substrate via the synthesis of an ACP-bound dec-4-enoate. The cytochrome P450 monooxygenase poxM-catalyzed oxidation at the alpha-position creates the enzyme-bound 2-hydroxydec-4-enoyl-ACP thioester, which may be prone to spontaneous hydrolysis to yield 2-hydroxydec-4-enoic acid due to increased electrophilicity of the carbonyl. 2-hydroxydec-4-enoic acid can then be further oxidized by poxM to yield the alpha-ketoacid 2-oxodec-4-enoicacid, which is reductively aminated by the aminotransferase poxL to yield (S,E)-2-aminodec-4-enoic acid. The Hybrid PKS-NRPS synthetase poxE then performs condensation between the octaketide product of its PKS modules and the amino group of (S,E)-2-aminodec-4-enoic acid which is activated and incorporated by the adenylation domain. The resulting aminoacyl product can be cyclized by the Diels-Alderase PoxQ and reductively released by the reductive (R) domain of poxE to yield an aldehyde intermediate. The released aldehyde is then substrate for a Knoevenagel condensation by the hydrolyase poxO followed by an oxidation at the 5-position of the pyrrolidone ring. The presence of the olefin from the amino acid building block allows for migration of the substituted allyl group to occur. This allylic transposition reaction takes place in a conjugate addition, semipinacol-like fashion to yield a succinimide intermediate. Iterative two-electron oxidations of the C7 methyl of the succinimide intermediate to the carboxylic acid can be catalyzed by one of two remaining cytochrome P450 monooxygenasess poxC or poxD to yield oxaleimide A. Subsequent oxidation yields the maleimide scaffold oxaleimide I. Both oxaleimide A and oxaleimide I can undergo oxidative modifications in the decalin ring to yield the series of products oxaleimides B to H. In Penicillium oxalicum (strain 114-2 / CGMCC 5302) (Penicillium decumbens), this protein is Cytochrome P450 monooxygenase poxM.